We begin with the raw amino-acid sequence, 105 residues long: MYAVVASGGKQHRVAVGDVVDVELLSGEPGAAVNLPALLLVDGESVTHDADALASVAVTAEVVGVVKGPKIRIHKFKNKTGYHKRQGHRQKLTRLKVTGIETGKA.

This sequence belongs to the bacterial ribosomal protein bL21 family. As to quaternary structure, part of the 50S ribosomal subunit. Contacts protein L20.

Functionally, this protein binds to 23S rRNA in the presence of protein L20. This chain is Large ribosomal subunit protein bL21, found in Frankia casuarinae (strain DSM 45818 / CECT 9043 / HFP020203 / CcI3).